We begin with the raw amino-acid sequence, 670 residues long: uncharacterized protein (670 aa).

10 consecutive transmembrane segments (helical) span residues 23 to 42 (YALRNTIAMCLALTVAYYLN), 47 to 69 (YWAMTSAAVVSFPTVGGVISKSL), 76 to 98 (LLGAIAALLLAGHTLNEPWFFLL), 118 to 140 (VAYAFQLAGYTAAIIAFPMVNIT), 153 to 170 (VCEVIVGILCGGMMMMIL), 381 to 403 (QWDAGANALTLAAISCVLYSAVA), 410 to 432 (SLLMRTLVLLSLFSFVVKFGLMV), 437 to 454 (LWQFLLFLFPLLATMQLL), 461 to 483 (FAALWGQLIVFMGSFIAVTNPPV), and 493 to 510 (NLAKIVGVALAWLAFAIL).

This sequence belongs to the aromatic acid exporter ArAE (TC 2.A.85) family.

It is found in the cell membrane. This is an uncharacterized protein from Escherichia coli O157:H7.